Consider the following 493-residue polypeptide: Ketol-acid reductoisomerase (NADP(+)) (493 aa).

One can recognise a KARI N-terminal Rossmann domain in the interval 14–208; that stretch reads LDQLGRCRFM…GGDRAGVLES (195 aa). Residues 45 to 48, R68, R76, S78, and 108 to 110 contribute to the NADP(+) site; these read CGAQ and DKQ. Residue H132 is part of the active site. G158 contributes to the NADP(+) binding site. KARI C-terminal knotted domains are found at residues 209-345 and 346-486; these read SFVA…APKA and DGIK…MTDM. Residues D217, E221, E390, and E394 each coordinate Mg(2+). S415 serves as a coordination point for substrate.

This sequence belongs to the ketol-acid reductoisomerase family. Mg(2+) is required as a cofactor.

The enzyme catalyses (2R)-2,3-dihydroxy-3-methylbutanoate + NADP(+) = (2S)-2-acetolactate + NADPH + H(+). It catalyses the reaction (2R,3R)-2,3-dihydroxy-3-methylpentanoate + NADP(+) = (S)-2-ethyl-2-hydroxy-3-oxobutanoate + NADPH + H(+). It participates in amino-acid biosynthesis; L-isoleucine biosynthesis; L-isoleucine from 2-oxobutanoate: step 2/4. The protein operates within amino-acid biosynthesis; L-valine biosynthesis; L-valine from pyruvate: step 2/4. Involved in the biosynthesis of branched-chain amino acids (BCAA). Catalyzes an alkyl-migration followed by a ketol-acid reduction of (S)-2-acetolactate (S2AL) to yield (R)-2,3-dihydroxy-isovalerate. In the isomerase reaction, S2AL is rearranged via a Mg-dependent methyl migration to produce 3-hydroxy-3-methyl-2-ketobutyrate (HMKB). In the reductase reaction, this 2-ketoacid undergoes a metal-dependent reduction by NADPH to yield (R)-2,3-dihydroxy-isovalerate. This Actinobacillus succinogenes (strain ATCC 55618 / DSM 22257 / CCUG 43843 / 130Z) protein is Ketol-acid reductoisomerase (NADP(+)).